A 208-amino-acid polypeptide reads, in one-letter code: Protein-L-isoaspartate O-methyltransferase (208 aa).

Residue S59 is part of the active site.

This sequence belongs to the methyltransferase superfamily. L-isoaspartyl/D-aspartyl protein methyltransferase family.

It is found in the cytoplasm. The enzyme catalyses [protein]-L-isoaspartate + S-adenosyl-L-methionine = [protein]-L-isoaspartate alpha-methyl ester + S-adenosyl-L-homocysteine. Its function is as follows. Catalyzes the methyl esterification of L-isoaspartyl residues in peptides and proteins that result from spontaneous decomposition of normal L-aspartyl and L-asparaginyl residues. It plays a role in the repair and/or degradation of damaged proteins. This Serratia proteamaculans (strain 568) protein is Protein-L-isoaspartate O-methyltransferase.